A 158-amino-acid chain; its full sequence is S-ribosylhomocysteine lyase (158 aa).

Residues histidine 54, histidine 58, and cysteine 124 each coordinate Fe cation.

The protein belongs to the LuxS family. As to quaternary structure, homodimer. Fe cation serves as cofactor.

It carries out the reaction S-(5-deoxy-D-ribos-5-yl)-L-homocysteine = (S)-4,5-dihydroxypentane-2,3-dione + L-homocysteine. In terms of biological role, involved in the synthesis of autoinducer 2 (AI-2) which is secreted by bacteria and is used to communicate both the cell density and the metabolic potential of the environment. The regulation of gene expression in response to changes in cell density is called quorum sensing. Catalyzes the transformation of S-ribosylhomocysteine (RHC) to homocysteine (HC) and 4,5-dihydroxy-2,3-pentadione (DPD). In Lactiplantibacillus plantarum (strain ATCC BAA-793 / NCIMB 8826 / WCFS1) (Lactobacillus plantarum), this protein is S-ribosylhomocysteine lyase.